Reading from the N-terminus, the 450-residue chain is Bifunctional protein GlmU (450 aa).

A pyrophosphorylase region spans residues 1–229; that stretch reads MRRHAIILAA…VEEIMGVNDR (229 aa). UDP-N-acetyl-alpha-D-glucosamine is bound by residues 8–11, lysine 22, glutamine 72, and 77–78; these read LAAG and GT. Residue aspartate 102 participates in Mg(2+) binding. UDP-N-acetyl-alpha-D-glucosamine-binding residues include glycine 139, glutamate 154, and asparagine 227. Asparagine 227 is a binding site for Mg(2+). Residues 230–250 are linker; it reads VMLSQAEKAMQRRTNHYHMLN. The tract at residues 251-450 is N-acetyltransferase; the sequence is GVTIIDPDST…RQTTKEGYRK (200 aa). 2 residues coordinate UDP-N-acetyl-alpha-D-glucosamine: arginine 332 and lysine 350. Catalysis depends on histidine 362, which acts as the Proton acceptor. UDP-N-acetyl-alpha-D-glucosamine-binding residues include tyrosine 365 and asparagine 376. Acetyl-CoA contacts are provided by residues 385-386, alanine 422, and arginine 439; that span reads NY.

The protein in the N-terminal section; belongs to the N-acetylglucosamine-1-phosphate uridyltransferase family. In the C-terminal section; belongs to the transferase hexapeptide repeat family. In terms of assembly, homotrimer. Requires Mg(2+) as cofactor.

The protein localises to the cytoplasm. The catalysed reaction is alpha-D-glucosamine 1-phosphate + acetyl-CoA = N-acetyl-alpha-D-glucosamine 1-phosphate + CoA + H(+). It catalyses the reaction N-acetyl-alpha-D-glucosamine 1-phosphate + UTP + H(+) = UDP-N-acetyl-alpha-D-glucosamine + diphosphate. It functions in the pathway nucleotide-sugar biosynthesis; UDP-N-acetyl-alpha-D-glucosamine biosynthesis; N-acetyl-alpha-D-glucosamine 1-phosphate from alpha-D-glucosamine 6-phosphate (route II): step 2/2. The protein operates within nucleotide-sugar biosynthesis; UDP-N-acetyl-alpha-D-glucosamine biosynthesis; UDP-N-acetyl-alpha-D-glucosamine from N-acetyl-alpha-D-glucosamine 1-phosphate: step 1/1. It participates in bacterial outer membrane biogenesis; LPS lipid A biosynthesis. Its function is as follows. Catalyzes the last two sequential reactions in the de novo biosynthetic pathway for UDP-N-acetylglucosamine (UDP-GlcNAc). The C-terminal domain catalyzes the transfer of acetyl group from acetyl coenzyme A to glucosamine-1-phosphate (GlcN-1-P) to produce N-acetylglucosamine-1-phosphate (GlcNAc-1-P), which is converted into UDP-GlcNAc by the transfer of uridine 5-monophosphate (from uridine 5-triphosphate), a reaction catalyzed by the N-terminal domain. This chain is Bifunctional protein GlmU, found in Staphylococcus aureus (strain NCTC 8325 / PS 47).